We begin with the raw amino-acid sequence, 73 residues long: Potassium channel toxin alpha-KTx 27.1 (73 aa).

The first 23 residues, 1 to 23 (MKFLFLTLFVCCFIAVLVIPSEA), serve as a signal peptide directing secretion.

The protein belongs to the short scorpion toxin superfamily. Potassium channel inhibitor family. Alpha-KTx 27 subfamily. Post-translationally, contains 4 disulfide bonds. As to expression, expressed by the venom gland.

Its subcellular location is the secreted. In Buthus israelis (Israeli scorpion), this protein is Potassium channel toxin alpha-KTx 27.1.